A 672-amino-acid chain; its full sequence is Poly-beta-1,6-N-acetyl-D-glucosamine N-deacetylase (672 aa).

A signal peptide spans 1–20; sequence MLRNGNKYLLMLVSIIMLTA. A lipid anchor (N-palmitoyl cysteine) is attached at Cys-21. Residue Cys-21 is the site of S-diacylglycerol cysteine attachment. The 243-residue stretch at 107–349 folds into the NodB homology domain; that stretch reads KAVVLTFDDG…IQRVKDMQIS (243 aa).

The protein belongs to the polysaccharide deacetylase family.

It is found in the cell outer membrane. Catalyzes the N-deacetylation of poly-beta-1,6-N-acetyl-D-glucosamine (PGA), a biofilm adhesin polysaccharide. N-deacetylation promotes PGA export through the PgaA porin. The chain is Poly-beta-1,6-N-acetyl-D-glucosamine N-deacetylase (pgaB) from Escherichia coli (strain K12).